A 468-amino-acid polypeptide reads, in one-letter code: uncharacterized protein (468 aa).

Residues 447–468 (AVHVSNGDKPKVALPDTQLGSH) form a disordered region.

Belongs to the mycobacterial PPE family.

This is an uncharacterized protein from Mycobacterium tuberculosis (strain CDC 1551 / Oshkosh).